A 692-amino-acid polypeptide reads, in one-letter code: Putative receptor-like protein kinase At1g80870 (692 aa).

Residues 20-40 (LFLILTISSSLVIFFAILYFI) traverse the membrane as a helical segment. Residues 81-673 (FDESNVIGKG…GEMDISSTAF (593 aa)) form the Protein kinase domain. Residues 87-95 (IGKGGSGTV) and Lys109 each bind ATP. Asp206 functions as the Proton acceptor in the catalytic mechanism. 2 disordered regions span residues 427 to 446 (EISE…HRNM) and 511 to 533 (RRKS…GSEM). Basic residues-rich tracts occupy residues 432 to 444 (KNKR…KKHR) and 511 to 524 (RRKS…KKKN).

The protein belongs to the protein kinase superfamily. Ser/Thr protein kinase family.

It is found in the cell membrane. It carries out the reaction L-seryl-[protein] + ATP = O-phospho-L-seryl-[protein] + ADP + H(+). It catalyses the reaction L-threonyl-[protein] + ATP = O-phospho-L-threonyl-[protein] + ADP + H(+). In Arabidopsis thaliana (Mouse-ear cress), this protein is Putative receptor-like protein kinase At1g80870.